A 443-amino-acid polypeptide reads, in one-letter code: Tol-Pal system protein TolB (443 aa).

An N-terminal signal peptide occupies residues Met1–Ala33.

This sequence belongs to the TolB family. In terms of assembly, the Tol-Pal system is composed of five core proteins: the inner membrane proteins TolA, TolQ and TolR, the periplasmic protein TolB and the outer membrane protein Pal. They form a network linking the inner and outer membranes and the peptidoglycan layer.

The protein resides in the periplasm. Functionally, part of the Tol-Pal system, which plays a role in outer membrane invagination during cell division and is important for maintaining outer membrane integrity. This Brucella suis biovar 1 (strain 1330) protein is Tol-Pal system protein TolB.